The following is a 194-amino-acid chain: Cysteine and glycine-rich protein 3 (194 aa).

The interaction with TCAP stretch occupies residues 1–5 (MPNWG). An LIM zinc-binding 1 domain is found at 10–61 (CGACEKTVYHAEEIQCNGRSFHKTCFHCMACRKALDSTTVAAHESEIYCKVC). The Nuclear localization signal signature appears at 64–69 (RRYGPK). The segment at 94-106 (QSPKQARSATTSS) is interaction with CLF2. 2 positions are modified to phosphoserine: serine 95 and serine 153. In terms of domain architecture, LIM zinc-binding 2 spans 120 to 171 (CPRCGKSVYAAEKVMGGGKPWHKTCFRCAICGKSLESTNVTDKDGELYCKVC).

Self-associates. Oligomeric in the cytoplasm and monomeric in the nucleus. Homooligomers preferentially form along the actin cytoskeleton. Interacts with TCAP, LDHD, MYOD1, MYOG, ACTN2, NRAP, MYF6. Interacts (via N-terminus) with GLRX3 (via C-terminus) and PPP3CA; GLRX3 and calcineurin compete for interaction with CSRP3. Interacts with CFL2; the stoichiometry influences F-actin depolymerization and possibly two molecules of CFL2 can interact with one molecule of CSRP3 resulting in the highest functional impact; the interaction is stronger with phosphorylated CFL2.

It is found in the nucleus. The protein localises to the cytoplasm. Its subcellular location is the cytoskeleton. It localises to the myofibril. The protein resides in the sarcomere. It is found in the z line. Functionally, positive regulator of myogenesis. Acts as a cofactor for myogenic bHLH transcription factors such as MYOD1, and probably MYOG and MYF6. Enhances the DNA-binding activity of the MYOD1:TCF3 isoform E47 complex and may promote formation of a functional MYOD1:TCF3 isoform E47:MEF2A complex involved in myogenesis. Plays a crucial and specific role in the organization of cytosolic structures in cardiomyocytes. Could play a role in mechanical stretch sensing. May be a scaffold protein that promotes the assembly of interacting proteins at Z-line structures. It is essential for calcineurin anchorage to the Z line. Required for stress-induced calcineurin-NFAT activation. The role in regulation of cytoskeleton dynamics by association with CFL2 is reported conflictingly. Proposed to contribute to the maintenance of muscle cell integrity through an actin-based mechanism. Can directly bind to actin filaments, cross-link actin filaments into bundles without polarity selectivity and protect them from dilution- and cofilin-mediated depolymerization; the function seems to involve its self-association. In vitro can inhibit PKC/PRKCA activity. Proposed to be involved in cardiac stress signaling by down-regulating excessive PKC/PRKCA signaling. The chain is Cysteine and glycine-rich protein 3 (CSRP3) from Bos taurus (Bovine).